The sequence spans 507 residues: L-amino-acid oxidase (507 aa).

The signal sequence occupies residues 1–19 (MNVLFIFSLLFLAALESCA). An intrachain disulfide couples cysteine 29 to cysteine 192. Residues 62-63 (MA), 82-83 (EA), arginine 90, and 106-109 (GPMR) contribute to the FAD site. Position 109 (arginine 109) interacts with substrate. N-linked (GlcNAc...) asparagine glycans are attached at residues asparagine 191 and asparagine 213. Valine 280 contributes to the FAD binding site. Residues cysteine 348 and cysteine 429 are joined by a disulfide bond. Asparagine 378 carries N-linked (GlcNAc...) asparagine glycosylation. Tyrosine 389 contacts substrate. Residues glutamate 473 and 480–485 (GWIDST) each bind FAD.

It belongs to the flavin monoamine oxidase family. FIG1 subfamily. In terms of assembly, homodimer; non-covalently linked. It depends on FAD as a cofactor. As to expression, expressed by the venom gland.

It is found in the secreted. The catalysed reaction is an L-alpha-amino acid + O2 + H2O = a 2-oxocarboxylate + H2O2 + NH4(+). It carries out the reaction L-leucine + O2 + H2O = 4-methyl-2-oxopentanoate + H2O2 + NH4(+). Its function is as follows. Catalyzes an oxidative deamination of predominantly hydrophobic and aromatic L-amino acids, thus producing hydrogen peroxide that may contribute to the diverse toxic effects of this enzyme. Shows activity on L-Leu. Exhibits diverse biological activities, such as hemorrhage, hemolysis, edema, apoptosis of vascular endothelial cells or tumor cell lines, antibacterial and antiparasitic activities. This protein induces platelet aggregation by both hydrogen peroxide production and binding to platelet membrane proteins (that would enhance the sensitivity of platelets to hydrogen peroxide). Effects of snake L-amino oxidases on platelets are controversial, since they either induce aggregation or inhibit agonist-induced aggregation. These different effects are probably due to different experimental conditions. In Naja atra (Chinese cobra), this protein is L-amino-acid oxidase.